Here is a 639-residue protein sequence, read N- to C-terminus: Protein phosphatase EYA4 (639 aa).

Met-1 bears the N-acetylmethionine mark. Disordered stretches follow at residues 1-72 (MEDS…GGEN), 210-232 (QTQSPLQSGCLSYSPGFSTPQPG), and 300-368 (ADGT…DSDL). Lys-14 participates in a covalent cross-link: Glycyl lysine isopeptide (Lys-Gly) (interchain with G-Cter in SUMO2). Residues 18 to 30 (ESDVSQSQNSRSM) are compositionally biased toward polar residues. Lys-52 is covalently cross-linked (Glycyl lysine isopeptide (Lys-Gly) (interchain with G-Cter in SUMO2)). The segment covering 56–66 (SNLSSTSVTTN) has biased composition (low complexity). Residues 300-334 (ADGTPSSTSTYQLQESLPGLTNQPGEFDTMQSPST) show a composition bias toward polar residues. Ser-361 is subject to Phosphoserine. Asp-375 serves as the catalytic Nucleophile. Asp-375, Asp-377, and Asp-603 together coordinate Mg(2+). Asp-377 (proton donor) is an active-site residue.

The protein belongs to the HAD-like hydrolase superfamily. EYA family. Interacts with SIX3; translocates EYA4 from the cytoplasm to the nucleus and promotes activation of their target genes. Mg(2+) is required as a cofactor. In terms of tissue distribution, highly expressed in heart and skeletal muscle.

The protein localises to the cytoplasm. It is found in the nucleus. The catalysed reaction is O-phospho-L-tyrosyl-[protein] + H2O = L-tyrosyl-[protein] + phosphate. Functionally, tyrosine phosphatase that specifically dephosphorylates 'Tyr-142' of histone H2AX (H2AXY142ph). 'Tyr-142' phosphorylation of histone H2AX plays a central role in DNA repair and acts as a mark that distinguishes between apoptotic and repair responses to genotoxic stress. Promotes efficient DNA repair by dephosphorylating H2AX, promoting the recruitment of DNA repair complexes containing MDC1. Its function as histone phosphatase probably explains its role in transcription regulation during organogenesis. May be involved in development of the eye. The polypeptide is Protein phosphatase EYA4 (EYA4) (Homo sapiens (Human)).